Reading from the N-terminus, the 527-residue chain is CTP synthase (527 aa).

Positions 1–270 (MKYIFVTGGV…ADVLCQLLQL (270 aa)) are amidoligase domain. Serine 12 contributes to the CTP binding site. A UTP-binding site is contributed by serine 12. Residues 13 to 18 (GLGKGI) and aspartate 70 contribute to the ATP site. Mg(2+) is bound by residues aspartate 70 and glutamate 145. CTP-binding positions include 152-154 (DIE), 191-196 (KTKPTQ), and lysine 227. Residues 191–196 (KTKPTQ) and lysine 227 each bind UTP. The region spanning 292 to 525 (TIGIVSKYGK…VEACLKNRGK (234 aa)) is the Glutamine amidotransferase type-1 domain. Glycine 349 is an L-glutamine binding site. Catalysis depends on cysteine 376, which acts as the Nucleophile; for glutamine hydrolysis. Residues 377–380 (LGFQ), glutamate 400, and arginine 455 each bind L-glutamine. Catalysis depends on residues histidine 498 and glutamate 500.

Belongs to the CTP synthase family. As to quaternary structure, homotetramer.

It carries out the reaction UTP + L-glutamine + ATP + H2O = CTP + L-glutamate + ADP + phosphate + 2 H(+). The enzyme catalyses L-glutamine + H2O = L-glutamate + NH4(+). The catalysed reaction is UTP + NH4(+) + ATP = CTP + ADP + phosphate + 2 H(+). It participates in pyrimidine metabolism; CTP biosynthesis via de novo pathway; CTP from UDP: step 2/2. With respect to regulation, allosterically activated by GTP, when glutamine is the substrate; GTP has no effect on the reaction when ammonia is the substrate. The allosteric effector GTP functions by stabilizing the protein conformation that binds the tetrahedral intermediate(s) formed during glutamine hydrolysis. Inhibited by the product CTP, via allosteric rather than competitive inhibition. Functionally, catalyzes the ATP-dependent amination of UTP to CTP with either L-glutamine or ammonia as the source of nitrogen. Regulates intracellular CTP levels through interactions with the four ribonucleotide triphosphates. This chain is CTP synthase, found in Methanospirillum hungatei JF-1 (strain ATCC 27890 / DSM 864 / NBRC 100397 / JF-1).